The primary structure comprises 517 residues: MLDINALKEIPPATAVGAAVAVGALYFFCQCFYNLYLHPLRKIPGPKLAAIGPYLEFYHEVLRDGQYLWEIEKMHQKYGPIVRVNAREVHVKDTSYYNTIYTAGARKTNKDPATVGAFDVPTATAATVDHDLHRARRGYLNPYFSKRAVAGLEPTIHERITKLLSRFDQHRKDDQVLSLDGAFSALTADVITARFYGEHKDYLDVPDFHFVVRDGFQGLSRVYHLGRFLPSVVGALKGLPKFLIRIIFPPIAELLTMREEIEAGGIDEFTKSKSSGIKSSVLVGALSDPHIPPQERTVARMLDEGTVFLFAGTETTSRTLGITMFYLLSNPDILNKLREELKSLPPSDDNMHSLGQLENLPYLTGVVHEGLRLSFGPISRSSRVATHEALQYKEHTIPAGTPVSQSTYFVHTDTEIFPDPWEFKPERWIKAAEDGVALKKYITNFSQGSRQCIGYSMSFAEMFLTLSRIIPAFDLELYDTTKADIDMTHARIVGYPKKVPGKTESLGELRVKVIKKL.

Residues 15 to 37 form a helical membrane-spanning segment; sequence AVGAAVAVGALYFFCQCFYNLYL. Asn-444 is a glycosylation site (N-linked (GlcNAc...) asparagine). Cys-452 provides a ligand contact to heme.

Belongs to the cytochrome P450 family. Requires heme as cofactor.

The protein resides in the membrane. The protein operates within sesquiterpene biosynthesis; trichothecene biosynthesis. Cytochrome P450 monooxygenase; part of the gene cluster that mediates the production of the antimicrobial trichothecene harzianum A (HA) that plays a role in Botrytis cinerea antagonistic activity and plant defense priming. The biosynthesis of harzianum A begins with the cyclization of farnesyl diphosphate to trichodiene and is catalyzed by the trichodiene synthase TRI5. Trichodiene undergoes a series of oxygenations catalyzed by the cytochrome P450 monooxygenase TRI4. TRI4 controls the addition of 3 oxygens at C-2, C-11, and the C-12, C-13-epoxide to form the intermediate isotrichodiol. Isotrichodiol then undergoes a non-enzymatic isomerization and cyclization to form 12,13-epoxytrichothec-9-ene (EPT) which is further converted to trichodermol by the cytochrome P450 monooxygenase TRI11 via C-4 hydroxylation. The last step of HA synthesis is esterification of an octatriendioyl moiety to the C-4 oxygen of trichodermol. The octatriendioyl moiety is probably produced by the polyketide synthase TRI17 and the esterification performed by the trichothecene O-acetyltransferase TRI3. This is Cytochrome P450 monooxygenase TRI4 from Trichoderma arundinaceum.